Consider the following 433-residue polypeptide: Enolase 2 (433 aa).

The segment at 34-56 (RGMVPSGASTGEHEAVELRDGDK) is disordered. Residues 44-56 (GEHEAVELRDGDK) show a composition bias toward basic and acidic residues. Q163 lines the (2R)-2-phosphoglycerate pocket. Residue E205 is the Proton donor of the active site. 3 residues coordinate Mg(2+): D243, E290, and D317. (2R)-2-phosphoglycerate-binding residues include K342, R371, S372, and K393. K342 (proton acceptor) is an active-site residue.

This sequence belongs to the enolase family. Mg(2+) is required as a cofactor.

The protein localises to the cytoplasm. Its subcellular location is the secreted. It is found in the cell surface. The catalysed reaction is (2R)-2-phosphoglycerate = phosphoenolpyruvate + H2O. The protein operates within carbohydrate degradation; glycolysis; pyruvate from D-glyceraldehyde 3-phosphate: step 4/5. Its function is as follows. Catalyzes the reversible conversion of 2-phosphoglycerate (2-PG) into phosphoenolpyruvate (PEP). It is essential for the degradation of carbohydrates via glycolysis. This chain is Enolase 2, found in Lactococcus lactis subsp. cremoris (strain SK11).